The primary structure comprises 735 residues: Mitochondrial potassium channel ATP-binding subunit (735 aa).

The transit peptide at methionine 1–phenylalanine 25 directs the protein to the mitochondrion. Residues glutamine 26–histidine 144 are Mitochondrial matrix-facing. Residues leucine 145–isoleucine 165 traverse the membrane as a helical segment. Positions valine 150–arginine 437 constitute an ABC transmembrane type-1 domain. Residues proline 166–serine 195 lie on the Mitochondrial intermembrane side of the membrane. The helical transmembrane segment at threonine 196–leucine 216 threads the bilayer. Topologically, residues serine 217–threonine 295 are mitochondrial matrix. Residues leucine 296 to leucine 316 form a helical membrane-spanning segment. The Mitochondrial intermembrane segment spans residues arginine 317–serine 735. Residues valine 472–arginine 709 enclose the ABC transporter domain. Residue glycine 507 to threonine 514 coordinates ATP. A disordered region spans residues leucine 712–serine 735.

The protein belongs to the ABC transporter superfamily. ABCB family. Multidrug resistance exporter (TC 3.A.1.201) subfamily. In terms of assembly, the mitochondrial potassium channel (mitoK(ATP)) is composed of 4 subunits of CCDC51/MITOK and 4 subunits of ABCB8/MITOSUR. Interacts with C10orf88/PAAT. Interacts with NRP1; NRP1 regulates ABCB8/MITOSUR protein levels in mitochondria. As to expression, ubiquitous.

The protein localises to the mitochondrion inner membrane. With respect to regulation, channel activity inhibited by ATP via ABCB8/MITOSUR subunit. Its function is as follows. ATP-binding subunit of the mitochondrial ATP-gated potassium channel (mitoK(ATP)). Together with pore-forming subunit CCDC51/MITOK of the mitoK(ATP) channel, mediates ATP-dependent potassium currents across the mitochondrial inner membrane. An increase in ATP intracellular levels closes the channel, inhibiting K(+) transport, whereas a decrease in ATP levels enhances K(+) uptake in the mitochondrial matrix. Plays a role in mitochondrial iron transport. Required for maintenance of normal cardiac function, possibly by influencing mitochondrial iron export and regulating the maturation of cytosolic iron sulfur cluster-containing enzymes. In Homo sapiens (Human), this protein is Mitochondrial potassium channel ATP-binding subunit.